A 350-amino-acid polypeptide reads, in one-letter code: L-serine dehydratase (350 aa).

Lys62 is modified (N6-(pyridoxal phosphate)lysine).

Belongs to the serine/threonine dehydratase family. The cofactor is pyridoxal 5'-phosphate.

The protein resides in the cytoplasm. The catalysed reaction is L-serine = pyruvate + NH4(+). Its pathway is carbohydrate biosynthesis; gluconeogenesis. The chain is L-serine dehydratase (sds) from Dictyostelium discoideum (Social amoeba).